Reading from the N-terminus, the 227-residue chain is Translation initiation factor 6 (227 aa).

The protein belongs to the eIF-6 family.

Binds to the 50S ribosomal subunit and prevents its association with the 30S ribosomal subunit to form the 70S initiation complex. The chain is Translation initiation factor 6 from Methanococcus maripaludis (strain C6 / ATCC BAA-1332).